A 176-amino-acid chain; its full sequence is Cytochrome b (176 aa).

3 consecutive transmembrane segments (helical) span residues 33–53 (FGSL…FLAM), 77–98 (WMLR…YLHV), and 113–133 (WNVG…GYVL). Heme b is bound by residues His83 and His97.

This sequence belongs to the cytochrome b family. In terms of assembly, the cytochrome bc1 complex contains 11 subunits: 3 respiratory subunits (MT-CYB, CYC1 and UQCRFS1), 2 core proteins (UQCRC1 and UQCRC2) and 6 low-molecular weight proteins (UQCRH/QCR6, UQCRB/QCR7, UQCRQ/QCR8, UQCR10/QCR9, UQCR11/QCR10 and a cleavage product of UQCRFS1). This cytochrome bc1 complex then forms a dimer. Heme b serves as cofactor.

Its subcellular location is the mitochondrion inner membrane. Component of the ubiquinol-cytochrome c reductase complex (complex III or cytochrome b-c1 complex) that is part of the mitochondrial respiratory chain. The b-c1 complex mediates electron transfer from ubiquinol to cytochrome c. Contributes to the generation of a proton gradient across the mitochondrial membrane that is then used for ATP synthesis. In Idionycteris phyllotis (Allen's big-eared bat), this protein is Cytochrome b (MT-CYB).